The chain runs to 79 residues: Acyl carrier protein (79 aa).

In terms of domain architecture, Carrier spans 2 to 77 (SDIEARVRKI…HAIDYIKSNA (76 aa)). O-(pantetheine 4'-phosphoryl)serine is present on S37.

The protein belongs to the acyl carrier protein (ACP) family. In terms of processing, 4'-phosphopantetheine is transferred from CoA to a specific serine of apo-ACP by AcpS. This modification is essential for activity because fatty acids are bound in thioester linkage to the sulfhydryl of the prosthetic group.

The protein resides in the cytoplasm. It functions in the pathway lipid metabolism; fatty acid biosynthesis. Functionally, carrier of the growing fatty acid chain in fatty acid biosynthesis. This is Acyl carrier protein from Xylella fastidiosa (strain M23).